The following is a 445-amino-acid chain: tRNA modification GTPase MnmE (445 aa).

(6S)-5-formyl-5,6,7,8-tetrahydrofolate contacts are provided by Arg-20, Glu-79, and Lys-119. The region spanning 215-371 is the TrmE-type G domain; it reads GLKLAIVGPP…ILKNIENIAE (157 aa). Asn-225 is a K(+) binding site. GTP-binding positions include 225–230, 244–250, and 269–272; these read NTGKSS, SNIAGTT, and DTAG. Residue Ser-229 participates in Mg(2+) binding. K(+)-binding residues include Ser-244, Ile-246, and Thr-249. Thr-250 serves as a coordination point for Mg(2+). A (6S)-5-formyl-5,6,7,8-tetrahydrofolate-binding site is contributed by Lys-445.

This sequence belongs to the TRAFAC class TrmE-Era-EngA-EngB-Septin-like GTPase superfamily. TrmE GTPase family. Homodimer. Heterotetramer of two MnmE and two MnmG subunits. It depends on K(+) as a cofactor.

Its subcellular location is the cytoplasm. Its function is as follows. Exhibits a very high intrinsic GTPase hydrolysis rate. Involved in the addition of a carboxymethylaminomethyl (cmnm) group at the wobble position (U34) of certain tRNAs, forming tRNA-cmnm(5)s(2)U34. This is tRNA modification GTPase MnmE from Rickettsia akari (strain Hartford).